Reading from the N-terminus, the 337-residue chain is DNA-directed RNA polymerase subunit alpha (337 aa).

The interval 1–233 (MIQKNWQELI…DQLSIFVNFE (233 aa)) is alpha N-terminal domain (alpha-NTD). Residues 249-337 (FNPALLKKVD…DLAKRYEDQY (89 aa)) form an alpha C-terminal domain (alpha-CTD) region.

Belongs to the RNA polymerase alpha chain family. Homodimer. The RNAP catalytic core consists of 2 alpha, 1 beta, 1 beta' and 1 omega subunit. When a sigma factor is associated with the core the holoenzyme is formed, which can initiate transcription.

It carries out the reaction RNA(n) + a ribonucleoside 5'-triphosphate = RNA(n+1) + diphosphate. Its function is as follows. DNA-dependent RNA polymerase catalyzes the transcription of DNA into RNA using the four ribonucleoside triphosphates as substrates. The chain is DNA-directed RNA polymerase subunit alpha from Brucella abortus (strain S19).